The primary structure comprises 78 residues: D-alanyl carrier protein (78 aa).

Residues 1 to 78 enclose the Carrier domain; that stretch reads MAFRENVLEI…MIITQLEALK (78 aa). Residue Ser36 is modified to O-(pantetheine 4'-phosphoryl)serine.

Belongs to the DltC family. In terms of processing, 4'-phosphopantetheine is transferred from CoA to a specific serine of apo-DCP.

It localises to the cytoplasm. The protein operates within cell wall biogenesis; lipoteichoic acid biosynthesis. Carrier protein involved in the D-alanylation of lipoteichoic acid (LTA). The loading of thioester-linked D-alanine onto DltC is catalyzed by D-alanine--D-alanyl carrier protein ligase DltA. The DltC-carried D-alanyl group is further transferred to cell membrane phosphatidylglycerol (PG) by forming an ester bond, probably catalyzed by DltD. D-alanylation of LTA plays an important role in modulating the properties of the cell wall in Gram-positive bacteria, influencing the net charge of the cell wall. The polypeptide is D-alanyl carrier protein (Listeria monocytogenes serotype 4a (strain HCC23)).